The following is a 232-amino-acid chain: 7-cyano-7-deazaguanine synthase (232 aa).

8-18 (FSGGQDSTTCL) contacts ATP. 4 residues coordinate Zn(2+): Cys-188, Cys-197, Cys-200, and Cys-203.

It belongs to the QueC family. The cofactor is Zn(2+).

It catalyses the reaction 7-carboxy-7-deazaguanine + NH4(+) + ATP = 7-cyano-7-deazaguanine + ADP + phosphate + H2O + H(+). It participates in purine metabolism; 7-cyano-7-deazaguanine biosynthesis. Its function is as follows. Catalyzes the ATP-dependent conversion of 7-carboxy-7-deazaguanine (CDG) to 7-cyano-7-deazaguanine (preQ(0)). In Buchnera aphidicola subsp. Schizaphis graminum (strain Sg), this protein is 7-cyano-7-deazaguanine synthase.